The following is a 342-amino-acid chain: Serpentine receptor class beta-16 (342 aa).

The Extracellular segment spans residues 1–22 (MDRELIEICKENSATAFSVGYQ). The helical transmembrane segment at 23-43 (IVYLIYVVLSVTSIFTCSYFI) threads the bilayer. At 44-61 (KTFIWNSTFHPNFKLLLT) the chain is on the cytoplasmic side. A helical membrane pass occupies residues 62 to 82 (MYFFAAIFHSFLFTASYLMMI). The Extracellular segment spans residues 83–102 (ERFLDYQTDCDIHVSMVPYA). A helical membrane pass occupies residues 103-123 (IVHSSIACCLFCGMLTQVFMV). At 124-141 (IERLLATIKIESYEHNTS) the chain is on the cytoplasmic side. The helical transmembrane segment at 142 to 162 (FWHILAYLFFCIVLPLSLLVW) threads the bilayer. Residues 163–187 (AYQDADYNSPVITAISPPKGVEIRL) are Extracellular-facing. The chain crosses the membrane as a helical span at residues 188-208 (NILYIFCFFLAILALILLQVV). The Cytoplasmic segment spans residues 209-237 (RFVNKRRESRIEISLSGRFQIVENIDTTT). The chain crosses the membrane as a helical span at residues 238–258 (FISSILIINMIMSVIYIVGTF). Residues 259 to 274 (TLRNFQFDAFINNQPA) lie on the Extracellular side of the membrane. The chain crosses the membrane as a helical span at residues 275 to 295 (LATVKTIFYLHPLFSFLMPLI). Over 296–342 (SSYHLSKMRERRVKRREHLMAIKTKGREGSDAYNQLLHDQWTQHFLK) the chain is Cytoplasmic.

The protein belongs to the nematode receptor-like protein srb family. As to expression, expressed throughout the nervous system, in pharyngeal muscle, hermaphrodite vulval muscles and in the male tail. Not expressed in male somatic gonads or sperm.

The protein resides in the cell membrane. It localises to the perikaryon. The protein localises to the cell projection. Its subcellular location is the dendrite. Functionally, G-protein coupled receptor. Plays a role in the navigational capacity of sperm and promotes the targeting of sperm derived from males to the fertilization site in the uterus of hermaphrodites. The protein is Serpentine receptor class beta-16 of Caenorhabditis elegans.